Reading from the N-terminus, the 219-residue chain is Protein OPG170 (219 aa).

An N-terminal signal peptide occupies residues 1-16 (MYSLLFIILMCIPFSF). N-linked (GlcNAc...) asparagine; by host glycosylation is present at Asn70.

It belongs to the orthopoxvirus OPG170 family.

It is found in the secreted. May interact with several cellular chemokines to interfere with chemokine-glycosaminoglycan (GAG) interactions at the cell surface to alter chemotaxis of nearby responsive cells. This Vaccinia virus (strain Copenhagen) (VACV) protein is Protein OPG170 (OPG170).